The primary structure comprises 29 residues: CKSPGTPCSRGMRDCCTSCLLYSNKCRRY.

3 disulfides stabilise this stretch: C1-C16, C8-C19, and C15-C26. 4-hydroxyproline occurs at positions 4 and 7.

Expressed by the venom duct.

Its subcellular location is the secreted. Functionally, omega-conotoxins act at presynaptic membranes, they bind and block voltage-gated calcium channels (Cav). This Conus geographus (Geography cone) protein is Omega-conotoxins GVIIA/GVIIB.